The chain runs to 445 residues: C-terminal-binding protein 2 (445 aa).

R22 carries the asymmetric dimethylarginine modification. NAD(+) is bound by residues S106, 186–191 (IGFGRT), D210, 243–249 (CNLNEHN), 270–272 (AAR), and D296. The active site involves R272. The active site involves E301. H321 acts as the Proton donor in catalysis. 321–324 (HTAW) lines the NAD(+) pocket. Positions 414-445 (THNLPTVAHPSQAPSPNQPTKHGDNREHPNEQ) are disordered. The residue at position 428 (S428) is a Phosphoserine. Residues 434–445 (KHGDNREHPNEQ) show a composition bias toward basic and acidic residues.

This sequence belongs to the D-isomer specific 2-hydroxyacid dehydrogenase family. As to quaternary structure, interacts with the C-terminus of adenovirus E1A protein. Can form homodimers or heterodimers of CTBP1 and CTBP2. Interacts with HIPK2. Interacts with ZNF217, PNN, NRIP1 and WIZ. Interacts with PRDM16; represses white adipose tissue (WAT)-specific genes expression. Interacts with MCRIP1. In terms of tissue distribution, isoform 2 is specifically localized in synaptic ribbon (at protein level).

Its subcellular location is the nucleus. It is found in the synapse. Functionally, corepressor targeting diverse transcription regulators. Functions in brown adipose tissue (BAT) differentiation. Isoform 2 probably acts as a scaffold for specialized synapses. This is C-terminal-binding protein 2 (CTBP2) from Bos taurus (Bovine).